We begin with the raw amino-acid sequence, 61 residues long: Insect toxin BsIT3 (61 aa).

The 61-residue stretch at 1 to 61 (DGYILNSKGC…RWTSSKNKCN (61 aa)) folds into the LCN-type CS-alpha/beta domain. 4 disulfides stabilise this stretch: C10–C60, C14–C35, C21–C42, and C25–C44.

Belongs to the long (4 C-C) scorpion toxin superfamily. Sodium channel inhibitor family. Beta subfamily. In terms of tissue distribution, expressed by the venom gland.

It is found in the secreted. In terms of biological role, depressant insect beta-toxins cause a transient contraction paralysis followed by a slow flaccid paralysis. They bind voltage-independently at site-4 of sodium channels (Nav) and shift the voltage of activation toward more negative potentials thereby affecting sodium channel activation and promoting spontaneous and repetitive firing. This toxin is active only on insects. This Hottentotta tamulus sindicus (Scorpion) protein is Insect toxin BsIT3.